A 469-amino-acid chain; its full sequence is Aspartyl/glutamyl-tRNA(Asn/Gln) amidotransferase subunit B (469 aa).

This sequence belongs to the GatB/GatE family. GatB subfamily. In terms of assembly, heterotrimer of A, B and C subunits.

It catalyses the reaction L-glutamyl-tRNA(Gln) + L-glutamine + ATP + H2O = L-glutaminyl-tRNA(Gln) + L-glutamate + ADP + phosphate + H(+). It carries out the reaction L-aspartyl-tRNA(Asn) + L-glutamine + ATP + H2O = L-asparaginyl-tRNA(Asn) + L-glutamate + ADP + phosphate + 2 H(+). Its function is as follows. Allows the formation of correctly charged Asn-tRNA(Asn) or Gln-tRNA(Gln) through the transamidation of misacylated Asp-tRNA(Asn) or Glu-tRNA(Gln) in organisms which lack either or both of asparaginyl-tRNA or glutaminyl-tRNA synthetases. The reaction takes place in the presence of glutamine and ATP through an activated phospho-Asp-tRNA(Asn) or phospho-Glu-tRNA(Gln). The chain is Aspartyl/glutamyl-tRNA(Asn/Gln) amidotransferase subunit B from Thermus thermophilus (strain ATCC BAA-163 / DSM 7039 / HB27).